Consider the following 150-residue polypeptide: Large ribosomal subunit protein uL15 (150 aa).

It belongs to the universal ribosomal protein uL15 family. As to quaternary structure, part of the 50S ribosomal subunit.

In terms of biological role, binds to the 23S rRNA. The sequence is that of Large ribosomal subunit protein uL15 from Rickettsia typhi (strain ATCC VR-144 / Wilmington).